Here is a 498-residue protein sequence, read N- to C-terminus: Glycerol kinase (498 aa).

Thr-12 serves as a coordination point for ADP. Residues Thr-12, Thr-13, and Ser-14 each coordinate ATP. Sn-glycerol 3-phosphate is bound at residue Thr-12. Arg-16 contributes to the ADP binding site. Arg-82, Glu-83, Tyr-134, and Asp-244 together coordinate sn-glycerol 3-phosphate. Glycerol contacts are provided by Arg-82, Glu-83, Tyr-134, Asp-244, and Gln-245. Residues Thr-266 and Gly-310 each contribute to the ADP site. Residues Thr-266, Gly-310, Gln-314, and Gly-411 each contribute to the ATP site. ADP is bound by residues Gly-411 and Asn-415.

This sequence belongs to the FGGY kinase family.

It catalyses the reaction glycerol + ATP = sn-glycerol 3-phosphate + ADP + H(+). The protein operates within polyol metabolism; glycerol degradation via glycerol kinase pathway; sn-glycerol 3-phosphate from glycerol: step 1/1. With respect to regulation, inhibited by fructose 1,6-bisphosphate (FBP). In terms of biological role, key enzyme in the regulation of glycerol uptake and metabolism. Catalyzes the phosphorylation of glycerol to yield sn-glycerol 3-phosphate. This is Glycerol kinase from Azorhizobium caulinodans (strain ATCC 43989 / DSM 5975 / JCM 20966 / LMG 6465 / NBRC 14845 / NCIMB 13405 / ORS 571).